A 610-amino-acid polypeptide reads, in one-letter code: Dopamine beta-hydroxylase (610 aa).

The Cytoplasmic segment spans residues 1–9; that stretch reads MQVPSPSVR. A helical; Signal-anchor for type II membrane protein transmembrane segment spans residues 10-30; that stretch reads EAASMYGTAVAVFLVILVAAL. At 31–610 the chain is on the intragranular side; sequence QGSAPAESPF…TVLNISGGKG (580 aa). The DOMON domain occupies 50–166; the sequence is GTLELSWNIS…GTVHLVYGFL (117 aa). 6 cysteine pairs are disulfide-bonded: Cys-147/Cys-589, Cys-225/Cys-276, Cys-262/Cys-288, Cys-383/Cys-496, Cys-387/Cys-558, and Cys-459/Cys-481. Residue Asn-177 is glycosylated (N-linked (GlcNAc...) asparagine). Residue Tyr-223 is part of the active site. 2 residues coordinate Cu(2+): His-255 and His-256. Cu(2+)-binding residues include His-326, His-405, His-407, and Met-480. The active site involves His-405. A glycan (N-linked (GlcNAc...) asparagine) is linked at Asn-559. Residues 585 to 610 form a disordered region; sequence PTPHCPASQAQSPAGPTVLNISGGKG.

The protein belongs to the copper type II ascorbate-dependent monooxygenase family. In terms of assembly, homotetramer; composed of two disulfide-linked dimers. The cofactor is Cu(2+). In terms of processing, proteolytic cleavage after the membrane-anchor leads to the release of the soluble form. N-glycosylated. Detected in chromaffin granules in the adrenal medulla (at protein level). Detected in adrenal medulla.

It localises to the cytoplasmic vesicle. Its subcellular location is the secretory vesicle lumen. It is found in the secretory vesicle. The protein localises to the chromaffin granule lumen. The protein resides in the secretory vesicle membrane. It localises to the chromaffin granule membrane. The enzyme catalyses dopamine + 2 L-ascorbate + O2 = (R)-noradrenaline + 2 monodehydro-L-ascorbate radical + H2O. It participates in catecholamine biosynthesis; (R)-noradrenaline biosynthesis; (R)-noradrenaline from dopamine: step 1/1. Catalyzes the hydroxylation of dopamine to noradrenaline (also known as norepinephrine), and is thus vital for regulation of these neurotransmitters. The sequence is that of Dopamine beta-hydroxylase (DBH) from Bos taurus (Bovine).